A 113-amino-acid polypeptide reads, in one-letter code: Cytochrome c oxidase subunit 7A2-like, mitochondrial (113 aa).

A mitochondrion-targeting transit peptide spans methionine 1–serine 54. At lysine 68 the chain carries N6-acetyllysine. A helical membrane pass occupies residues proline 81 to methionine 106.

It belongs to the cytochrome c oxidase VIIa family. In terms of assembly, interacts with the mitochondrial respiratory complexes III (CIII) and IV (CIV), promoting their association.

It is found in the mitochondrion inner membrane. It functions in the pathway energy metabolism; oxidative phosphorylation. In terms of biological role, assembly factor that mediates the formation of some mitochondrial respiratory supercomplexes (respirasomes), thereby promoting oxidative phosphorylation and energy metabolism. Acts as a molecular adapter that associates with both mitochondrial respiratory complexes III (CIII) and IV (CIV), promoting their association. Mediates the formation of various mitochondrial respiratory supercomplexes, such as MCIII(2)IV(2), composed of two CIII and two CIV, and the CS-respirasome (MCI(1)III(2)IV(2)), composed of one CI, two CIII and two CIV. Not involved in the formation of the canonical respirasome (MCI(1)III(2)IV(1)), composed of one CI, two CIII and one CIV. The formation of different respirasomes is important for cell adaptation to oxygen conditions and prevent metabolic exhaustion: supercomplexes mediated by COX7A2L/SCAF1 are required to maintain oxidative phosphorylation upon low oxygen conditions and promote metabolic rewiring toward glycolysis. The sequence is that of Cytochrome c oxidase subunit 7A2-like, mitochondrial from Mus musculus (Mouse).